A 153-amino-acid polypeptide reads, in one-letter code: Small ribosomal subunit protein uS15 (153 aa).

The protein belongs to the universal ribosomal protein uS15 family. Part of the 30S ribosomal subunit.

This Sulfolobus acidocaldarius (strain ATCC 33909 / DSM 639 / JCM 8929 / NBRC 15157 / NCIMB 11770) protein is Small ribosomal subunit protein uS15.